The sequence spans 279 residues: Protein gustavus (279 aa).

Residues 36–233 form the B30.2/SPRY domain; the sequence is PARIDILLDM…ITMRYIGGLD (198 aa). One can recognise an SOCS box domain in the interval 234–279; the sequence is PEPLPLMDLCRRTIRQKIGRTNLEEHIQQLQLPLSMKTYLLYKNRR. The tract at residues 236-279 is involved in binding to the Elongin BC complex; it reads PLPLMDLCRRTIRQKIGRTNLEEHIQQLQLPLSMKTYLLYKNRR.

It belongs to the SPSB family. In terms of assembly, interacts (via B30.2/SPRY domain) with vas; this interaction may be necessary for the transport of vas to the posterior pole of the oocyte. Interacts with Cul-5. May associate with the Elongin BC complex composed of Elongin-B and Elongin-C. As to expression, expressed in ovaries, primarily in nurse cells and oocytes (at protein level).

The protein resides in the cytoplasm. It is found in the nucleus. Its function is as follows. Involved in the localization of vas to the posterior pole of the oocyte. Required maternally in the germ line for efficient primordial germ cell formation. The protein is Protein gustavus (gus) of Drosophila melanogaster (Fruit fly).